The chain runs to 250 residues: NAD-dependent protein deacylase (250 aa).

Positions 1 to 250 (MIVEVARVLA…VVHEVRRLLQ (250 aa)) constitute a Deacetylase sirtuin-type domain. Residue 20-39 (GAGISAESGVPTFRGKDGLW) participates in NAD(+) binding. 2 residues coordinate substrate: tyrosine 64 and arginine 67. 98–101 (QNVD) contributes to the NAD(+) binding site. Residue histidine 116 is the Proton acceptor of the active site. Zn(2+)-binding residues include cysteine 124, cysteine 127, cysteine 150, and cysteine 153. NAD(+) is bound by residues 190 to 192 (GTS), 216 to 218 (NVE), and alanine 234.

Belongs to the sirtuin family. Class III subfamily. The cofactor is Zn(2+).

It localises to the cytoplasm. The catalysed reaction is N(6)-acetyl-L-lysyl-[protein] + NAD(+) + H2O = 2''-O-acetyl-ADP-D-ribose + nicotinamide + L-lysyl-[protein]. It catalyses the reaction N(6)-succinyl-L-lysyl-[protein] + NAD(+) + H2O = 2''-O-succinyl-ADP-D-ribose + nicotinamide + L-lysyl-[protein]. In terms of biological role, NAD-dependent lysine deacetylase and desuccinylase that specifically removes acetyl and succinyl groups on target proteins. Modulates the activities of several proteins which are inactive in their acylated form. Deacetylates the N-terminal lysine residue of Alba, the major archaeal chromatin protein and that, in turn, increases Alba's DNA binding affinity, thereby repressing transcription. This Pyrococcus abyssi (strain GE5 / Orsay) protein is NAD-dependent protein deacylase.